The following is a 296-amino-acid chain: ATP synthase gamma chain (296 aa).

Belongs to the ATPase gamma chain family. F-type ATPases have 2 components, CF(1) - the catalytic core - and CF(0) - the membrane proton channel. CF(1) has five subunits: alpha(3), beta(3), gamma(1), delta(1), epsilon(1). CF(0) has three main subunits: a, b and c.

It localises to the cell inner membrane. In terms of biological role, produces ATP from ADP in the presence of a proton gradient across the membrane. The gamma chain is believed to be important in regulating ATPase activity and the flow of protons through the CF(0) complex. This Methylorubrum extorquens (strain CM4 / NCIMB 13688) (Methylobacterium extorquens) protein is ATP synthase gamma chain.